Here is a 109-residue protein sequence, read N- to C-terminus: Cytochrome c-550 (109 aa).

Heme c is bound by residues Cys13, Cys16, His17, and Met79.

Post-translationally, binds 1 heme c group covalently per subunit.

The polypeptide is Cytochrome c-550 (Nitrobacter winogradskyi (Nitrobacter agilis)).